A 378-amino-acid chain; its full sequence is Ferredoxin--NADP reductase, root isozyme, chloroplastic (378 aa).

The span at 1–17 shows a compositional bias: low complexity; sequence MATAVASQVAVSAPAGS. A disordered region spans residues 1–27; that stretch reads MATAVASQVAVSAPAGSDRGLRSSGIQ. The transit peptide at 1-62 directs the protein to the chloroplast; the sequence is MATAVASQVA…PRHANKVLCM (62 aa). One can recognise an FAD-binding FR-type domain in the interval 93–221; the sequence is KEPYTATIVS…TGPSGKIMLL (129 aa). Residues 153–156, 174–176, Y180, 195–197, and T237 contribute to the FAD site; these read RLYS, CVR, and VCS. NADP(+)-binding residues include S156 and R176. NADP(+) is bound by residues T237, 269 to 270, 299 to 300, K309, 337 to 338, and E376; these read VA, SR, and GL.

The protein belongs to the ferredoxin--NADP reductase type 1 family. Requires FAD as cofactor.

Its subcellular location is the plastid. The protein resides in the chloroplast. The catalysed reaction is 2 reduced [2Fe-2S]-[ferredoxin] + NADP(+) + H(+) = 2 oxidized [2Fe-2S]-[ferredoxin] + NADPH. It participates in energy metabolism; photosynthesis. In terms of biological role, may play a key role in regulating the relative amounts of cyclic and non-cyclic electron flow to meet the demands of the plant for ATP and reducing power. Is involved in nitrate assimilation. This Oryza sativa subsp. japonica (Rice) protein is Ferredoxin--NADP reductase, root isozyme, chloroplastic.